We begin with the raw amino-acid sequence, 329 residues long: Ficolin-2 (329 aa).

The signal sequence occupies residues 1-29; it reads MELGGAAGALGPSGPLLVCLCFGTLAAQA. Residues 52–111 form the Collagen-like domain; it reads GCPGLPGAPGLKGETGAAGLKGERGLPGVPGKAGPAGPKGSTGAQGEKGARGEKGESGQL. Residues 64–113 are disordered; that stretch reads GETGAAGLKGERGLPGVPGKAGPAGPKGSTGAQGEKGARGEKGESGQLHS. Residues 77–90 are compositionally biased toward low complexity; sequence LPGVPGKAGPAGPK. The 218-residue stretch at 112–329 folds into the Fibrinogen C-terminal domain; sequence HSCATGPRTC…KVSEMKLRLT (218 aa). Disulfide bonds link Cys114–Cys142 and Cys121–Cys149. Residues Asp265, Asp267, Ser269, and Ser271 each coordinate Ca(2+). The cysteines at positions 273 and 286 are disulfide-linked. Asn316 is a glycosylation site (N-linked (GlcNAc...) asparagine).

The protein belongs to the ficolin lectin family. As to quaternary structure, homotrimer. Interacts with elastin. Interacts with MASP1 and MASP2.

The protein resides in the secreted. Functionally, may function in innate immunity through activation of the lectin complement pathway. Calcium-dependent and GlcNAc-binding lectin. The chain is Ficolin-2 (FCN2) from Bos taurus (Bovine).